Reading from the N-terminus, the 278-residue chain is 4-hydroxy-tetrahydrodipicolinate reductase (278 aa).

NAD(+) contacts are provided by residues 13–18 and 111–113; these read GAAGKM and GTT. His-167 (proton donor/acceptor) is an active-site residue. (S)-2,3,4,5-tetrahydrodipicolinate is bound at residue His-168. The active-site Proton donor is Lys-171. 177–178 contacts (S)-2,3,4,5-tetrahydrodipicolinate; the sequence is GT.

This sequence belongs to the DapB family.

It is found in the cytoplasm. It catalyses the reaction (S)-2,3,4,5-tetrahydrodipicolinate + NAD(+) + H2O = (2S,4S)-4-hydroxy-2,3,4,5-tetrahydrodipicolinate + NADH + H(+). The catalysed reaction is (S)-2,3,4,5-tetrahydrodipicolinate + NADP(+) + H2O = (2S,4S)-4-hydroxy-2,3,4,5-tetrahydrodipicolinate + NADPH + H(+). Its pathway is amino-acid biosynthesis; L-lysine biosynthesis via DAP pathway; (S)-tetrahydrodipicolinate from L-aspartate: step 4/4. Catalyzes the conversion of 4-hydroxy-tetrahydrodipicolinate (HTPA) to tetrahydrodipicolinate. The protein is 4-hydroxy-tetrahydrodipicolinate reductase of Nostoc sp. (strain PCC 7120 / SAG 25.82 / UTEX 2576).